A 435-amino-acid polypeptide reads, in one-letter code: MESQWRGAAATAFHQHWLARLLLWVSTLSCSFSLPASLPPSLVPRVRSSYTMGKTFLGLDKCNACIGTSICKKFFKEEIRFDNSLASHLGLPPQDLHSYAANYSDDSKTWRPVEISQLVSRYQIEISDRRICASVSAPKTCSIERILQKTGRFQKWLQAKRLTPDLVQGLPSPFLRCPSQRLLDRVVRRYAEVVDAGSIFMDHFTAGDKLRLLYTLAVNAHPIILQIFPGAEGWPMPRYLGSCGRFLVSTSTRPLQEFYDASPEQAADLAYQLLRVLESLRSNDLNYFFYFTHVDAGMFGIFDNGHLFIRDASALGIIDKQEGSQAAARTGENEDIFSCLVSDCQIQLSSCDTVPEKQSLVLVCQQLLPQLLQGKFPSPVQKEIDSALSLCSKDNSTDLEVLGATSWLKDILRSLRTCDPRFAYRYPDCKYNDRF.

The signal sequence occupies residues 1–33 (MESQWRGAAATAFHQHWLARLLLWVSTLSCSFS). N-linked (GlcNAc...) asparagine glycans are attached at residues asparagine 102 and asparagine 395.

This sequence belongs to the DIPK family.

The protein resides in the secreted. In Mus musculus (Mouse), this protein is Divergent protein kinase domain 2B (Dipk2b).